A 190-amino-acid polypeptide reads, in one-letter code: Hypoxanthine/guanine phosphoribosyltransferase (190 aa).

It belongs to the purine/pyrimidine phosphoribosyltransferase family. Archaeal HPRT subfamily. In terms of assembly, homodimer.

Its subcellular location is the cytoplasm. It carries out the reaction IMP + diphosphate = hypoxanthine + 5-phospho-alpha-D-ribose 1-diphosphate. The catalysed reaction is GMP + diphosphate = guanine + 5-phospho-alpha-D-ribose 1-diphosphate. It functions in the pathway purine metabolism; IMP biosynthesis via salvage pathway; IMP from hypoxanthine: step 1/1. Catalyzes a salvage reaction resulting in the formation of IMP that is energically less costly than de novo synthesis. This Methanohalobium evestigatum (strain ATCC BAA-1072 / DSM 3721 / NBRC 107634 / OCM 161 / Z-7303) protein is Hypoxanthine/guanine phosphoribosyltransferase.